A 494-amino-acid chain; its full sequence is Glutamyl-tRNA(Gln) amidotransferase subunit A (494 aa).

Residues lysine 80 and serine 160 each act as charge relay system in the active site. Positions 140 to 168 (GNVISPWRRPGDTAPLAPGGSSGGSSSAV) are disordered. The active-site Acyl-ester intermediate is the serine 184.

The protein belongs to the amidase family. GatA subfamily. Heterotrimer of A, B and C subunits.

The catalysed reaction is L-glutamyl-tRNA(Gln) + L-glutamine + ATP + H2O = L-glutaminyl-tRNA(Gln) + L-glutamate + ADP + phosphate + H(+). Functionally, allows the formation of correctly charged Gln-tRNA(Gln) through the transamidation of misacylated Glu-tRNA(Gln) in organisms which lack glutaminyl-tRNA synthetase. The reaction takes place in the presence of glutamine and ATP through an activated gamma-phospho-Glu-tRNA(Gln). This chain is Glutamyl-tRNA(Gln) amidotransferase subunit A, found in Novosphingobium aromaticivorans (strain ATCC 700278 / DSM 12444 / CCUG 56034 / CIP 105152 / NBRC 16084 / F199).